Consider the following 39-residue polypeptide: Photosystem II reaction center protein J (39 aa).

A helical membrane pass occupies residues 7–27; that stretch reads IPLWIVAVVAGMGVIAVVGIF.

It belongs to the PsbJ family. As to quaternary structure, PSII is composed of 1 copy each of membrane proteins PsbA, PsbB, PsbC, PsbD, PsbE, PsbF, PsbH, PsbI, PsbJ, PsbK, PsbL, PsbM, PsbT, PsbX, PsbY, PsbZ, Psb30/Ycf12, peripheral proteins PsbO, CyanoQ (PsbQ), PsbU, PsbV and a large number of cofactors. It forms dimeric complexes.

It localises to the cellular thylakoid membrane. Functionally, this protein is a component of the reaction center of photosystem II. Its function is as follows. One of the components of the core complex of photosystem II (PSII). PSII is a light-driven water:plastoquinone oxidoreductase that uses light energy to abstract electrons from H(2)O, generating O(2) and a proton gradient subsequently used for ATP formation. It consists of a core antenna complex that captures photons, and an electron transfer chain that converts photonic excitation into a charge separation. This chain is Photosystem II reaction center protein J, found in Picosynechococcus sp. (strain ATCC 27264 / PCC 7002 / PR-6) (Agmenellum quadruplicatum).